A 69-amino-acid chain; its full sequence is Cytochrome c oxidase subunit 8A, mitochondrial (69 aa).

Residues 1 to 25 (MSVLTPLLLRGLTGSARRLPVPRAQ) constitute a mitochondrion transit peptide. The SIFI-degron signature appears at 2–19 (SVLTPLLLRGLTGSARRL). Residues 26–36 (VHSMPPEQKLG) are Mitochondrial matrix-facing. Residues 37-60 (VLELAIGFTSCLVTFLLPAGWILS) form a helical membrane-spanning segment. Residues 61-69 (HLDSYKKRG) are Mitochondrial intermembrane-facing.

This sequence belongs to the cytochrome c oxidase VIII family. In terms of assembly, component of the cytochrome c oxidase (complex IV, CIV), a multisubunit enzyme composed of 14 subunits. The complex is composed of a catalytic core of 3 subunits MT-CO1, MT-CO2 and MT-CO3, encoded in the mitochondrial DNA, and 11 supernumerary subunits COX4I, COX5A, COX5B, COX6A, COX6B, COX6C, COX7A, COX7B, COX7C, COX8 and NDUFA4, which are encoded in the nuclear genome. The complex exists as a monomer or a dimer and forms supercomplexes (SCs) in the inner mitochondrial membrane with NADH-ubiquinone oxidoreductase (complex I, CI) and ubiquinol-cytochrome c oxidoreductase (cytochrome b-c1 complex, complex III, CIII), resulting in different assemblies (supercomplex SCI(1)III(2)IV(1) and megacomplex MCI(2)III(2)IV(2)). Post-translationally, in response to mitochondrial stress, the precursor protein is ubiquitinated by the SIFI complex in the cytoplasm before mitochondrial import, leading to its degradation. Within the SIFI complex, UBR4 initiates ubiquitin chain that are further elongated or branched by KCMF1.

It localises to the mitochondrion inner membrane. Its pathway is energy metabolism; oxidative phosphorylation. Functionally, component of the cytochrome c oxidase, the last enzyme in the mitochondrial electron transport chain which drives oxidative phosphorylation. The respiratory chain contains 3 multisubunit complexes succinate dehydrogenase (complex II, CII), ubiquinol-cytochrome c oxidoreductase (cytochrome b-c1 complex, complex III, CIII) and cytochrome c oxidase (complex IV, CIV), that cooperate to transfer electrons derived from NADH and succinate to molecular oxygen, creating an electrochemical gradient over the inner membrane that drives transmembrane transport and the ATP synthase. Cytochrome c oxidase is the component of the respiratory chain that catalyzes the reduction of oxygen to water. Electrons originating from reduced cytochrome c in the intermembrane space (IMS) are transferred via the dinuclear copper A center (CU(A)) of subunit 2 and heme A of subunit 1 to the active site in subunit 1, a binuclear center (BNC) formed by heme A3 and copper B (CU(B)). The BNC reduces molecular oxygen to 2 water molecules using 4 electrons from cytochrome c in the IMS and 4 protons from the mitochondrial matrix. This is Cytochrome c oxidase subunit 8A, mitochondrial (COX8A) from Saimiri sciureus (Common squirrel monkey).